The following is a 447-amino-acid chain: Na(+)-translocating NADH-quinone reductase subunit A (447 aa).

It belongs to the NqrA family. As to quaternary structure, composed of six subunits; NqrA, NqrB, NqrC, NqrD, NqrE and NqrF.

The catalysed reaction is a ubiquinone + n Na(+)(in) + NADH + H(+) = a ubiquinol + n Na(+)(out) + NAD(+). NQR complex catalyzes the reduction of ubiquinone-1 to ubiquinol by two successive reactions, coupled with the transport of Na(+) ions from the cytoplasm to the periplasm. NqrA to NqrE are probably involved in the second step, the conversion of ubisemiquinone to ubiquinol. The protein is Na(+)-translocating NADH-quinone reductase subunit A of Klebsiella pneumoniae (strain 342).